A 251-amino-acid polypeptide reads, in one-letter code: Type III pantothenate kinase (251 aa).

6-13 is an ATP binding site; sequence DCGNSFIK. Substrate is bound by residues tyrosine 93 and 100-103; that span reads GLDR. Residue aspartate 102 is the Proton acceptor of the active site. Aspartate 122 serves as a coordination point for K(+). ATP is bound at residue threonine 125. Position 182 (threonine 182) interacts with substrate.

This sequence belongs to the type III pantothenate kinase family. In terms of assembly, homodimer. NH4(+) is required as a cofactor. K(+) serves as cofactor.

It is found in the cytoplasm. The catalysed reaction is (R)-pantothenate + ATP = (R)-4'-phosphopantothenate + ADP + H(+). The protein operates within cofactor biosynthesis; coenzyme A biosynthesis; CoA from (R)-pantothenate: step 1/5. Functionally, catalyzes the phosphorylation of pantothenate (Pan), the first step in CoA biosynthesis. The chain is Type III pantothenate kinase from Azotobacter vinelandii (strain DJ / ATCC BAA-1303).